A 67-amino-acid chain; its full sequence is Small ribosomal subunit protein bS21 (67 aa).

Belongs to the bacterial ribosomal protein bS21 family.

The sequence is that of Small ribosomal subunit protein bS21 from Magnetococcus marinus (strain ATCC BAA-1437 / JCM 17883 / MC-1).